The following is a 529-amino-acid chain: Non-reducing end alpha-L-arabinofuranosidase BoGH43B (529 aa).

The N-terminal stretch at 1–23 (MMKNSCRLLLILIGLWMANVSLA) is a signal peptide. D38 (proton acceptor) is an active-site residue. E198 (proton donor) is an active-site residue.

It belongs to the glycosyl hydrolase 43 family.

It localises to the periplasm. It carries out the reaction Hydrolysis of terminal non-reducing alpha-L-arabinofuranoside residues in alpha-L-arabinosides.. It functions in the pathway glucan metabolism; xyloglucan degradation. In terms of biological role, alpha-L-arabinofuranosidase involved in xyloglucan degradation by mediating the cleavage of terminal non-reducing alpha-L-arabinofuranoside residues in xyloglucan branches, converting the 'S' units to 'X' units. This Bacteroides ovatus (strain ATCC 8483 / DSM 1896 / JCM 5824 / BCRC 10623 / CCUG 4943 / NCTC 11153) protein is Non-reducing end alpha-L-arabinofuranosidase BoGH43B.